The chain runs to 865 residues: MFGRTLALAAVFATTVLSAAASLEECPGYKVSNVRDNGHTLKADLRLAGKACNVYGEDIRQLKLRVEYQTHERLHVIIEDSKEDVYQVPESVFPRPESEENDSASTKSALKFSMTQKPFSFKVTRRATDEVIFDTSNSPLIFESQYLRLRTSLPDEPNLYGLGEHSDPLRLQTEDLVTTLWNRDAFGIPPGTNLYGSHPVYYDHRGRSGTHGVFLLNSNGMDVKVGSEDGDNGKKYLEYNILGGVLDFYFMAGPTPKEVASQYAEVVGLPAMMPYWGFGLHQCRYGYRDAFNVAEVVYNYSQAGIPLETMWTDIDYMDGRKVFTLDSKRFPIDEMRALVEYLHDRNQHYIVMVDPAVSYGDNDAFERGKTQDVFMKSKDGAIYKGAVWPGVTAFPDWFHPGTQDYWNNEFKLFFDPEKGIDIDALWIDMNEASNFCDWPCSDPEGWERDHDLPPAPPPVRPIPRPLPGFPDKLQPGSVRLVKRDGTRLRSKAGLPGRDLIDPPYRIQNEAGSISNKTLNTDLVHANGLVEYDTHNLYGTMLTKYRLGDNLSEWSQYRFSISQILQFAAIYQVPMVGADVCGFGGNVTEELCARWAMLGAFYPFYRNHNDIAGRDQEFYRWESVTEAARTAIGIRYKLLDYIYTAFHRQTQSGDPVLNPLFYIYPEDEDTFAIDLQFFYGDALLVSPVTEEGATSVEIYLPDDIFYDYYTGEPIEGKGDLITMENVPITHIPLHFRGGQIVPMRADSANTTTELRKQPFELVICLDREGNAEGSLYLDDGDSLEQPHTSEINFEYHNGVLKVSGKFDFQNEEALEIKNIFVLGYKQDMNVQDKGNMNKDSQYDARLKKLAIKAKILLTGPSEMTLH.

Positions 1-21 (MFGRTLALAAVFATTVLSAAA) are cleaved as a signal peptide. N-linked (GlcNAc...) asparagine glycosylation is found at asparagine 101 and asparagine 299. Catalysis depends on aspartate 428, which acts as the Nucleophile. Residue glutamate 431 is part of the active site. Residue asparagine 515 is glycosylated (N-linked (GlcNAc...) asparagine). Aspartate 548 serves as the catalytic Proton donor. Asparagine 549, asparagine 585, and asparagine 748 each carry an N-linked (GlcNAc...) asparagine glycan.

It belongs to the glycosyl hydrolase 31 family.

The protein localises to the secreted. It carries out the reaction Hydrolysis of terminal, non-reducing (1-&gt;4)-linked alpha-D-glucose residues with release of alpha-D-glucose.. It catalyses the reaction Hydrolysis of terminal, non-reducing beta-D-glucosyl residues with release of beta-D-glucose.. Its function is as follows. Glucosidase involved in the degradation of cellulosic biomass. Has both alpha- and beta-glucosidase activity. This Arthroderma benhamiae (strain ATCC MYA-4681 / CBS 112371) (Trichophyton mentagrophytes) protein is Probable alpha/beta-glucosidase ARB_02101.